The following is a 436-amino-acid chain: MKSEKSRTTSWLFQSHEVTEILGRVKKNRKKLVKGLHRAGPPPEKNYLPDSPALSPIELKQELPKYLPALQGCRSVEEFQCLNRIEEGTYGVVYRAKDKKTDEIVALKRLKMEKEKEGFPLTSIREINTILKAQHPNIVTVREIVVGSNMDKIYIVMNYVEHDLKSLMETMKQPFLPGEVKTLMIQLLSGVKHLHDNWILHRDLKTSNLLLTHAGILKVGDFGLAREYGSPLKAYTPVVVTLWYRAPELLLGAKEYSTACDMWSVGCIFGELLTQKPLFPGKSDIDQINKIFKDIGTPSEKIWPGYSELPAVKKMTFSELPYNNLRKRFGALLSDQGFDLMNKFLTYYPGRRINAEDGLKHEYFRETPLPIDPSMFPTWPAKSEQQCVKRGTSPKPPEGGLGYSQLGDDDLKETGFHLTTTNDGAVSCRPWCSLLF.

A Nuclear localization signal motif is present at residues 25-30 (VKKNRK). Residues 30–44 (KKLVKGLHRAGPPPE) are calmodulin-binding. The Protein kinase domain maps to 79 to 364 (FQCLNRIEEG…AEDGLKHEYF (286 aa)). Residues 85 to 93 (IEEGTYGVV) and Lys-108 contribute to the ATP site. Ser-123 bears the Phosphoserine; by CDK7 mark. Thr-129 carries the phosphothreonine; by CDK7 modification. Catalysis depends on Asp-203, which acts as the Proton acceptor. Residue Ser-230 is modified to Phosphoserine. Tyr-235 bears the Phosphotyrosine mark. Thr-236 is modified (phosphothreonine). Lys-282 is covalently cross-linked (Glycyl lysine isopeptide (Lys-Gly) (interchain with G-Cter in SUMO2)). The tract at residues 383–406 (SEQQCVKRGTSPKPPEGGLGYSQL) is disordered. A Phosphothreonine modification is found at Thr-392. At Ser-393 the chain carries Phosphoserine.

This sequence belongs to the protein kinase superfamily. CMGC Ser/Thr protein kinase family. CDC2/CDKX subfamily. May interact PAK1 and RANBP9. p110C interacts with RNPS1. Interacts with CCND3. Interacts with CCNL1 and CCNL2. Forms complexes with pre-mRNA-splicing factors, including at least SRSF1, SRSF2 AND SRSF7/SLU7. It depends on Mg(2+) as a cofactor.

It is found in the cytoplasm. The protein resides in the nucleus membrane. Its subcellular location is the endomembrane system. The protein localises to the perinuclear region. It catalyses the reaction L-seryl-[protein] + ATP = O-phospho-L-seryl-[protein] + ADP + H(+). The enzyme catalyses L-threonyl-[protein] + ATP = O-phospho-L-threonyl-[protein] + ADP + H(+). Functionally, plays multiple roles in cell cycle progression, cytokinesis and apoptosis. Involved in pre-mRNA splicing in a kinase activity-dependent manner. May act as a negative regulator of normal cell cycle progression. This is Cyclin-dependent kinase 11B (Cdk11b) from Rattus norvegicus (Rat).